The primary structure comprises 357 residues: Alanine racemase (357 aa).

The Proton acceptor; specific for D-alanine role is filled by K34. At K34 the chain carries N6-(pyridoxal phosphate)lysine. Substrate is bound at residue R130. Y253 (proton acceptor; specific for L-alanine) is an active-site residue. M301 is a substrate binding site.

The protein belongs to the alanine racemase family. Pyridoxal 5'-phosphate serves as cofactor.

The enzyme catalyses L-alanine = D-alanine. It participates in amino-acid biosynthesis; D-alanine biosynthesis; D-alanine from L-alanine: step 1/1. Functionally, catalyzes the interconversion of L-alanine and D-alanine. May also act on other amino acids. The protein is Alanine racemase (alr) of Mannheimia succiniciproducens (strain KCTC 0769BP / MBEL55E).